A 432-amino-acid chain; its full sequence is Glutamate-1-semialdehyde 2,1-aminomutase (432 aa).

At lysine 270 the chain carries N6-(pyridoxal phosphate)lysine.

This sequence belongs to the class-III pyridoxal-phosphate-dependent aminotransferase family. HemL subfamily. Homodimer. Pyridoxal 5'-phosphate serves as cofactor.

The protein resides in the cytoplasm. It carries out the reaction (S)-4-amino-5-oxopentanoate = 5-aminolevulinate. It functions in the pathway porphyrin-containing compound metabolism; protoporphyrin-IX biosynthesis; 5-aminolevulinate from L-glutamyl-tRNA(Glu): step 2/2. The chain is Glutamate-1-semialdehyde 2,1-aminomutase from Acinetobacter baumannii (strain ATCC 17978 / DSM 105126 / CIP 53.77 / LMG 1025 / NCDC KC755 / 5377).